A 543-amino-acid polypeptide reads, in one-letter code: Limonene hydroxylase (543 aa).

The region spanning Val232–Leu464 is the Sigma-54 factor interaction domain. ATP contacts are provided by residues Gly260–Glu267 and Ala324–Glu333.

It carries out the reaction (4S)-limonene + reduced [NADPH--hemoprotein reductase] + O2 = (1S,5R)-carveol + oxidized [NADPH--hemoprotein reductase] + H2O + H(+). It catalyses the reaction (4S)-limonene + reduced [NADPH--hemoprotein reductase] + O2 = (4S)-perillyl alcohol + oxidized [NADPH--hemoprotein reductase] + H2O + H(+). The enzyme catalyses perillyl alcohol + NAD(+) = perillyl aldehyde + NADH + H(+). The catalysed reaction is (1S,5R)-carveol + NADP(+) = (R)-carvone + NADPH + H(+). Functionally, involved in limonene hydroxylation to a mixture of carveol and perillyl alcohol as well as in dehydrogenation of these products to carvone and perillyl aldehyde. Aromatic alcohols containing an isopropyl or isopropenyl group at ring position 4 also served as substrates for the dehydrogenase activity. In Geobacillus stearothermophilus (Bacillus stearothermophilus), this protein is Limonene hydroxylase.